Reading from the N-terminus, the 240-residue chain is Glutathione S-transferase theta-1 (240 aa).

One can recognise a GST N-terminal domain in the interval 2-82; the sequence is VLELYLDLLS…YLAHKYKVPD (81 aa). Glutathione contacts are provided by residues His-40, 53–54, and 66–67; these read KV and ES. The region spanning 88-223 is the GST C-terminal domain; sequence DLQARARVDE…ILKVRDCPPA (136 aa).

This sequence belongs to the GST superfamily. Theta family. In terms of assembly, homodimer. In terms of tissue distribution, in liver, highest expression found in central vein limiting plate hepatocytes. In lung, expressed mainly in club cells of the bronchiolar epithelium and, at low levels, in type II alveolar cells.

The protein resides in the cytoplasm. The catalysed reaction is RX + glutathione = an S-substituted glutathione + a halide anion + H(+). Functionally, conjugation of reduced glutathione to a wide number of exogenous and endogenous hydrophobic electrophiles. Also binds steroids, bilirubin, carcinogens and numerous organic anions. Has dichloromethane dehalogenase activity. This Rattus norvegicus (Rat) protein is Glutathione S-transferase theta-1 (Gstt1).